The sequence spans 532 residues: MEGDSYHNATTVNGTPVYHQPLERHRLWEVISIAAVTAVVSLITIVGNVLVMISFKVNSQLKTVNNYYLLSLACADLIIGIFSMNLYTTYILMGRWALGSLACDLWLALDYVASNASVMNLLVISFDRYFSITRPLTYRAKRTPKRAGVMIGLAWLISFILWAPAILCWQYLVGKRTVPLDECQIQFLSEPTITFGTAIAAFYIPVSVMTILYCRIYRETEKRTKDLADLQGSDSVTEAEKRKPAHRALFRSCLRCPRPTLAQRERNQTSWSSSRRSASTSGKPSQATDPSTNQAKAEQLTTCSSYPSSEDEDKPATDPVLQVVYKSRGKESPGEEFSSEDAEETFVKAQTEKHDSDTPNYFLSPAAAHRPKSQKCVAYKFRLVVKADGTQENNNGCHKVKIMPCSFPVAKEPSTKGLNPNPSHQMTKRKRMVLVKERKAAQTLSAILLAFIITWTPYNIMVLVSTFCDKCVPVTLWHLGYWLCYVNSTVNPICYALCNRTFRKTFKMLLLCRWKKKKVEEKLYWQGNSKLP.

At 1-29 (MEGDSYHNATTVNGTPVYHQPLERHRLWE) the chain is on the extracellular side. N-linked (GlcNAc...) asparagine glycosylation occurs at Asn-8. The helical transmembrane segment at 30-53 (VISIAAVTAVVSLITIVGNVLVMI) threads the bilayer. Residues 54–66 (SFKVNSQLKTVNN) lie on the Cytoplasmic side of the membrane. A helical transmembrane segment spans residues 67-87 (YYLLSLACADLIIGIFSMNLY). Topologically, residues 88 to 104 (TTYILMGRWALGSLACD) are extracellular. Residues Cys-103 and Cys-183 are joined by a disulfide bond. Residues 105-126 (LWLALDYVASNASVMNLLVISF) form a helical membrane-spanning segment. Topologically, residues 127–146 (DRYFSITRPLTYRAKRTPKR) are cytoplasmic. A helical membrane pass occupies residues 147 to 169 (AGVMIGLAWLISFILWAPAILCW). Residues 170–191 (QYLVGKRTVPLDECQIQFLSEP) are Extracellular-facing. A helical membrane pass occupies residues 192–214 (TITFGTAIAAFYIPVSVMTILYC). Residues 215-443 (RIYRETEKRT…LVKERKAAQT (229 aa)) are Cytoplasmic-facing. Residues 262–365 (AQRERNQTSW…SDTPNYFLSP (104 aa)) are disordered. The span at 269–281 (TSWSSSRRSASTS) shows a compositional bias: low complexity. A compositionally biased stretch (polar residues) spans 282–308 (GKPSQATDPSTNQAKAEQLTTCSSYPS). Residues 444–464 (LSAILLAFIITWTPYNIMVLV) traverse the membrane as a helical segment. The Extracellular portion of the chain corresponds to 465-478 (STFCDKCVPVTLWH). Residues 479 to 498 (LGYWLCYVNSTVNPICYALC) traverse the membrane as a helical segment. Residues 499-532 (NRTFRKTFKMLLLCRWKKKKVEEKLYWQGNSKLP) lie on the Cytoplasmic side of the membrane. 2 positions are modified to phosphothreonine: Thr-501 and Thr-505.

The protein belongs to the G-protein coupled receptor 1 family. Muscarinic acetylcholine receptor subfamily. CHRM5 sub-subfamily.

Its subcellular location is the cell membrane. It is found in the postsynaptic cell membrane. Its function is as follows. The muscarinic acetylcholine receptor mediates various cellular responses, including inhibition of adenylate cyclase, breakdown of phosphoinositides and modulation of potassium channels through the action of G proteins. Primary transducing effect is Pi turnover. The protein is Muscarinic acetylcholine receptor M5 (CHRM5) of Macaca mulatta (Rhesus macaque).